Here is a 392-residue protein sequence, read N- to C-terminus: G2/mitotic-specific cyclin-B (392 aa).

It belongs to the cyclin family. Cyclin AB subfamily.

Its function is as follows. Essential for the control of the cell cycle at the G2/M (mitosis) transition. Interacts with the CDC2 protein kinase to form MPF. G2/M cyclins accumulate steadily during G2 and are abruptly destroyed at mitosis. The protein is G2/mitotic-specific cyclin-B of Hydra viridissima (Green hydra).